The sequence spans 143 residues: MFLGEYEHTIDDKGRLAIPARFRDALNEGVVITRGFDKCLMGFPRSVWEELARQVSSLPIGSEETRQLQRMLFSGAADMTLDRQGRILIPQNLREFAELGDQAIIAGLNRHFEIWAPRRWQNVLSAMDANASLFAQKLAELRF.

SpoVT-AbrB domains follow at residues 5 to 47 and 76 to 119; these read EYEH…PRSV and AADM…APRR.

Belongs to the MraZ family. Forms oligomers.

It is found in the cytoplasm. Its subcellular location is the nucleoid. This is Transcriptional regulator MraZ from Roseiflexus sp. (strain RS-1).